Consider the following 255-residue polypeptide: 5'-nucleotidase SurE (255 aa).

Asp8, Asp9, Ser39, and Asn95 together coordinate a divalent metal cation.

This sequence belongs to the SurE nucleotidase family. A divalent metal cation is required as a cofactor.

The protein localises to the cytoplasm. It carries out the reaction a ribonucleoside 5'-phosphate + H2O = a ribonucleoside + phosphate. In terms of biological role, nucleotidase that shows phosphatase activity on nucleoside 5'-monophosphates. This chain is 5'-nucleotidase SurE, found in Thermosipho melanesiensis (strain DSM 12029 / CIP 104789 / BI429).